The following is a 520-amino-acid chain: Acetyltransferase MAT1 (520 aa).

Active-site proton acceptor residues include His183 and Asp456.

The protein belongs to the plant acyltransferase family.

The protein operates within secondary metabolite biosynthesis. Acyl-CoA-dependent acyltransferase; part of the gene cluster that mediates the biosynthesis of mannosylerythritol lipids (MELs), surface-active substances that enhance the availability of water-insoluble substrates. Depending on the number of acetyl groups, mannosylerythritol lipids can be differentiated into MEL A (fully acetylated), MEL B and MEL C (monoacetylated at R-6 and R-4, respectively), and the fully deacetylated MEL D. The first step in the pathway is the generation of mannosylerythritol by the glycosyltransferase EMT1 which catalyzes the transfer of GDP-mannose to the C-4 atom of meso-erythritol. This reaction has to be stereospecific, since only mannosyl-D-erythritol is generated. The produced disaccharide is subsequently acylated with fatty acids of various lengths by the acyltransferases MAC1 and MAC2 at positions C-2 and C-3, repectively. The existence of MEL derivatives which carry an acetyl group at C-2 implies that at least MAC1 also accepts acetyl-CoA as a donor. The final step of MEL biosynthesis is the acetylation of the fully acylated mannosylerythritol lipids catalyzed by the acetyl-CoA-dependent acetyltransferase MAT1. MAT1 displays a relaxed regioselectivity and is able to transfer acetylgroups to both positions C-4 and C-6 of the mannosyl moiety. The chain is Acetyltransferase MAT1 from Pseudozyma antarctica (strain T-34) (Yeast).